The primary structure comprises 890 residues: Alanine--tRNA ligase (890 aa).

Residues histidine 572, histidine 576, cysteine 674, and histidine 678 each coordinate Zn(2+).

This sequence belongs to the class-II aminoacyl-tRNA synthetase family. Zn(2+) is required as a cofactor.

The protein resides in the cytoplasm. It carries out the reaction tRNA(Ala) + L-alanine + ATP = L-alanyl-tRNA(Ala) + AMP + diphosphate. Functionally, catalyzes the attachment of alanine to tRNA(Ala) in a two-step reaction: alanine is first activated by ATP to form Ala-AMP and then transferred to the acceptor end of tRNA(Ala). Also edits incorrectly charged Ser-tRNA(Ala) and Gly-tRNA(Ala) via its editing domain. This Prochlorococcus marinus (strain MIT 9211) protein is Alanine--tRNA ligase.